The sequence spans 875 residues: Protein HIR2 (875 aa).

WD repeat units follow at residues Ile10 to Phe47, Lys118 to Glu158, Lys163 to Leu201, Pro237 to Tyr277, Glu278 to Asn316, and Val320 to Ala359. The interval Glu398–Lys473 is disordered. Over residues Ala424–Tyr446 the composition is skewed to polar residues. 2 WD repeats span residues Leu546–Pro587 and Val589–Pro626. Residue Ser713 is modified to Phosphoserine.

This sequence belongs to the WD repeat HIR1 family. Component of the HIR complex, composed of HIR1, HIR2, HIR3 and HPC2. This complex may consist of one copy of HIR1 and HIR3 and two copies of HIR2 and HPC2. The HIR complex interacts with ASF1. Interacts with SNF2. Interacts with SNF5. Interacts with SWI3. Interacts with RTT106.

It localises to the nucleus. It is found in the chromosome. Its function is as follows. Component of the HIR complex, which cooperates with ASF1 to promote replication-independent chromatin assembly. The HIR complex is also required for the periodic repression of three of the four histone gene loci during the cell cycle as well as for autogenous regulation of the HTA1-HTB1 locus by H2A and H2B. DNA-binding by the HIR complex may repress transcription by inhibiting nucleosome remodeling by the SWI/SNF complex. The HIR complex may also be required for transcriptional silencing of centromeric, telomeric and mating-type loci in the absence of CAF-1. The protein is Protein HIR2 (HIR2) of Saccharomyces cerevisiae (strain ATCC 204508 / S288c) (Baker's yeast).